Reading from the N-terminus, the 190-residue chain is Adenine phosphoribosyltransferase (190 aa).

This sequence belongs to the purine/pyrimidine phosphoribosyltransferase family. As to quaternary structure, homodimer.

Its subcellular location is the cytoplasm. It catalyses the reaction AMP + diphosphate = 5-phospho-alpha-D-ribose 1-diphosphate + adenine. Its pathway is purine metabolism; AMP biosynthesis via salvage pathway; AMP from adenine: step 1/1. Functionally, catalyzes a salvage reaction resulting in the formation of AMP, that is energically less costly than de novo synthesis. The protein is Adenine phosphoribosyltransferase of Cupriavidus metallidurans (strain ATCC 43123 / DSM 2839 / NBRC 102507 / CH34) (Ralstonia metallidurans).